A 20-amino-acid chain; its full sequence is Mu-conotoxin SIIIB (20 aa).

Residue Gln1 is modified to Pyrrolidone carboxylic acid. Cystine bridges form between Cys3-Cys13, Cys4-Cys19, and Cys8-Cys20. Cys20 bears the Cysteine amide mark.

Expressed by the venom duct.

It is found in the secreted. Mu-conotoxins block voltage-gated sodium channels (VGSC). Potently displaces (125)I-TIIIA from native rat brain Nav1.2/SCN2A (IC(50) is 5 nM) and muscle Nav1.4/SCN4A (IC(50) is 3 nM) VGSCs. Potently and irreversibly inhibits current through Xenopus oocyte-expressed Nav1.2/SCN2A and Nav1.4/SCN4A. This Conus striatus (Striated cone) protein is Mu-conotoxin SIIIB.